The sequence spans 200 residues: Holliday junction branch migration complex subunit RuvA (200 aa).

The interval 1 to 63 is domain I; the sequence is MYAYIKGTLT…EDAQLLYGFI (63 aa). Residues 64 to 142 form a domain II region; the sequence is NQEEKDMFLS…INDVDSSQIL (79 aa). A flexible linker region spans residues 143–149; sequence NTDTQDH. The interval 150–200 is domain III; it reads ANAPIIKEALLALEALGYSKRELTKVEKSLSKETFDSVDDAVKRGLQLLIA.

This sequence belongs to the RuvA family. As to quaternary structure, homotetramer. Forms an RuvA(8)-RuvB(12)-Holliday junction (HJ) complex. HJ DNA is sandwiched between 2 RuvA tetramers; dsDNA enters through RuvA and exits via RuvB. An RuvB hexamer assembles on each DNA strand where it exits the tetramer. Each RuvB hexamer is contacted by two RuvA subunits (via domain III) on 2 adjacent RuvB subunits; this complex drives branch migration. In the full resolvosome a probable DNA-RuvA(4)-RuvB(12)-RuvC(2) complex forms which resolves the HJ.

It localises to the cytoplasm. In terms of biological role, the RuvA-RuvB-RuvC complex processes Holliday junction (HJ) DNA during genetic recombination and DNA repair, while the RuvA-RuvB complex plays an important role in the rescue of blocked DNA replication forks via replication fork reversal (RFR). RuvA specifically binds to HJ cruciform DNA, conferring on it an open structure. The RuvB hexamer acts as an ATP-dependent pump, pulling dsDNA into and through the RuvAB complex. HJ branch migration allows RuvC to scan DNA until it finds its consensus sequence, where it cleaves and resolves the cruciform DNA. The sequence is that of Holliday junction branch migration complex subunit RuvA from Staphylococcus saprophyticus subsp. saprophyticus (strain ATCC 15305 / DSM 20229 / NCIMB 8711 / NCTC 7292 / S-41).